A 276-amino-acid chain; its full sequence is Large ribosomal subunit protein uL2 (276 aa).

2 disordered regions span residues 33-55 (LVEAQGRSGGRNNNGRITSRHIG) and 221-276 (RGTA…AKKK).

This sequence belongs to the universal ribosomal protein uL2 family. Part of the 50S ribosomal subunit. Forms a bridge to the 30S subunit in the 70S ribosome.

In terms of biological role, one of the primary rRNA binding proteins. Required for association of the 30S and 50S subunits to form the 70S ribosome, for tRNA binding and peptide bond formation. It has been suggested to have peptidyltransferase activity; this is somewhat controversial. Makes several contacts with the 16S rRNA in the 70S ribosome. In Psychrobacter sp. (strain PRwf-1), this protein is Large ribosomal subunit protein uL2.